Here is a 188-residue protein sequence, read N- to C-terminus: Apolipoprotein M (188 aa).

The segment at residues 1–22 (MFHQIWAALLYFYGIILNSIYQ) is a signal peptide (not cleaved). Disulfide bonds link Cys23-Cys167, Cys95-Cys183, and Cys128-Cys157. N-linked (GlcNAc...) asparagine glycosylation is present at Asn135. Tetradecanoate-binding residues include Glu136 and Arg143.

Belongs to the calycin superfamily. Lipocalin family. Highly divergent. As to quaternary structure, interacts with LRP2; LRP2 mediates APOM renal uptake and subsequent lysosomal degradation. In terms of tissue distribution, plasma protein. Expressed in liver and kidney.

The protein localises to the secreted. Functionally, probably involved in lipid transport. Can bind sphingosine-1-phosphate, myristic acid, palmitic acid and stearic acid, retinol, all-trans-retinoic acid and 9-cis-retinoic acid. The protein is Apolipoprotein M (APOM) of Homo sapiens (Human).